The sequence spans 147 residues: Putative pre-16S rRNA nuclease (147 aa).

It belongs to the YqgF nuclease family.

It is found in the cytoplasm. Functionally, could be a nuclease involved in processing of the 5'-end of pre-16S rRNA. This is Putative pre-16S rRNA nuclease from Limosilactobacillus reuteri (strain DSM 20016) (Lactobacillus reuteri).